The sequence spans 499 residues: Cobyric acid synthase (499 aa).

The 192-residue stretch at 251 to 442 (SLDIAVVSLK…LHGVFDNLEW (192 aa)) folds into the GATase cobBQ-type domain. Catalysis depends on cysteine 332, which acts as the Nucleophile. Residue histidine 434 is part of the active site.

The protein belongs to the CobB/CobQ family. CobQ subfamily.

It participates in cofactor biosynthesis; adenosylcobalamin biosynthesis. Catalyzes amidations at positions B, D, E, and G on adenosylcobyrinic A,C-diamide. NH(2) groups are provided by glutamine, and one molecule of ATP is hydrogenolyzed for each amidation. This is Cobyric acid synthase from Streptococcus sanguinis (strain SK36).